A 382-amino-acid chain; its full sequence is Fetuin-B (382 aa).

The signal sequence occupies residues 1 to 15; sequence MGLLLPLALCILVLC. Cystatin fetuin-B-type domains lie at 25–138 and 149–255; these read ALNP…YNCT and MTCP…VTCD. N-linked (GlcNAc...) asparagine glycosylation is present at Asn37. 3 disulfide bridges follow: Cys93/Cys104, Cys117/Cys137, and Cys151/Cys154. A glycan (N-linked (GlcNAc...) asparagine) is linked at Asn136. N-linked (GlcNAc...) asparagine glycosylation is present at Asn182. 2 cysteine pairs are disulfide-bonded: Cys216–Cys224 and Cys237–Cys254. Composition is skewed to polar residues over residues 262-276 and 286-295; these read PATG…QKPT and QKNTPPTDSP. Disordered regions lie at residues 262–320 and 363–382; these read PATG…EKGP and ARTA…VLPP. O-linked (GalNAc...) threonine glycans are attached at residues Thr289 and Thr292. The span at 310–320 shows a compositional bias: basic and acidic residues; sequence LDDKNSQEKGP. Ser315 carries the post-translational modification Phosphoserine.

This sequence belongs to the fetuin family. In terms of tissue distribution, liver and testis.

The protein resides in the secreted. Protease inhibitor required for egg fertilization. Required to prevent premature zona pellucida hardening before fertilization, probably by inhibiting the protease activity of ASTL, a protease that mediates the cleavage of ZP2 and triggers zona pellucida hardening. This Homo sapiens (Human) protein is Fetuin-B (FETUB).